Consider the following 104-residue polypeptide: Co-chaperonin GroES 5 (104 aa).

The protein belongs to the GroES chaperonin family. Heptamer of 7 subunits arranged in a ring. Interacts with the chaperonin GroEL.

The protein localises to the cytoplasm. In terms of biological role, together with the chaperonin GroEL, plays an essential role in assisting protein folding. The GroEL-GroES system forms a nano-cage that allows encapsulation of the non-native substrate proteins and provides a physical environment optimized to promote and accelerate protein folding. GroES binds to the apical surface of the GroEL ring, thereby capping the opening of the GroEL channel. This is Co-chaperonin GroES 5 from Rhizobium meliloti (strain 1021) (Ensifer meliloti).